The primary structure comprises 660 residues: MASTLSPSITPQTEEPPVVPVRIQNAADISVIVIYFIVVLAVGLWSMVRSNRGTVGGFFLAGHDMAWWPMGASLFASNIGSNHFVGLAGTGAASGIAIAAVEWNALLMVLVLGWVFLPIYIKAGVLTMPEYLRKRFGGKRLQIYLSVLSLFIMVALQTSSIIFSGAIFIQLALGLNLYLAVFILLAITAFYTVAGGLASVIYTDSVQTFIMLLGSLILMGFAFAEVGGYESFTEKYMNAIPSVVEGDNLTISPKCYTPQPDSFHVFRDPVTGDIPWPGLIFGMTILAIWYWCADQVIVQRCLCGKNMSHVKAACILCGYLKLLPMFLMVMPGMISRILYTDKVACVVPSECEKQCGTAVGCTNYAYPTLVLELMPDGLRGLMLSVMLASLMSSLTSIFNSASTLFTIDLYTKIRKKASERELMIAGRIFGMVLIAVSILWVPLVQVSQNGQLFHYIGSVSSYLGPPLGAVFMLAIFFKRVNEQGAFWGLMVGLVVGLIRLIAEFVYGTGSCVAPSNCPKIICGVHYMYFAIILFFVSIIVILGVSFLTEPIPDVHLYRLCWSLWNNTEERIDLDAEELETQEEAGGALEEDSEQSRGCLKRACCLLCGLQNTGPKLTKEEEAALRQKFSDTSEKPLWRTVMNINAVLLLGVAVFVHAYFA.

Over 1–27 (MASTLSPSITPQTEEPPVVPVRIQNAA) the chain is Cytoplasmic. A helical transmembrane segment spans residues 28 to 48 (DISVIVIYFIVVLAVGLWSMV). Over 49 to 54 (RSNRGT) the chain is Extracellular. The helical transmembrane segment at 55 to 75 (VGGFFLAGHDMAWWPMGASLF) threads the bilayer. Topologically, residues 76 to 82 (ASNIGSN) are cytoplasmic. A helical transmembrane segment spans residues 83–103 (HFVGLAGTGAASGIAIAAVEW). The Extracellular portion of the chain corresponds to 104 to 105 (NA). Residues 106 to 126 (LLMVLVLGWVFLPIYIKAGVL) form a helical membrane-spanning segment. Residues 127–142 (TMPEYLRKRFGGKRLQ) lie on the Cytoplasmic side of the membrane. Residues 143–163 (IYLSVLSLFIMVALQTSSIIF) traverse the membrane as a helical segment. At 164–166 (SGA) the chain is on the extracellular side. The helical transmembrane segment at 167–187 (IFIQLALGLNLYLAVFILLAI) threads the bilayer. The Cytoplasmic segment spans residues 188–208 (TAFYTVAGGLASVIYTDSVQT). Residues 209–229 (FIMLLGSLILMGFAFAEVGGY) traverse the membrane as a helical segment. The Extracellular segment spans residues 230–277 (ESFTEKYMNAIPSVVEGDNLTISPKCYTPQPDSFHVFRDPVTGDIPWP). A helical transmembrane segment spans residues 278-298 (GLIFGMTILAIWYWCADQVIV). Residues 299 to 313 (QRCLCGKNMSHVKAA) lie on the Cytoplasmic side of the membrane. Residues 314–334 (CILCGYLKLLPMFLMVMPGMI) traverse the membrane as a helical segment. Residues 335–380 (SRILYTDKVACVVPSECEKQCGTAVGCTNYAYPTLVLELMPDGLRG) are Extracellular-facing. The chain crosses the membrane as a helical span at residues 381-401 (LMLSVMLASLMSSLTSIFNSA). Over 402 to 423 (STLFTIDLYTKIRKKASERELM) the chain is Cytoplasmic. A helical membrane pass occupies residues 424–444 (IAGRIFGMVLIAVSILWVPLV). Residues 445–455 (QVSQNGQLFHY) are Extracellular-facing. Residues 456 to 476 (IGSVSSYLGPPLGAVFMLAIF) form a helical membrane-spanning segment. Residues 477 to 484 (FKRVNEQG) are Cytoplasmic-facing. A helical membrane pass occupies residues 485-505 (AFWGLMVGLVVGLIRLIAEFV). Residues 506–526 (YGTGSCVAPSNCPKIICGVHY) are Extracellular-facing. The chain crosses the membrane as a helical span at residues 527 to 547 (MYFAIILFFVSIIVILGVSFL). Residues 548 to 639 (TEPIPDVHLY…DTSEKPLWRT (92 aa)) are Cytoplasmic-facing. A helical transmembrane segment spans residues 640-660 (VMNINAVLLLGVAVFVHAYFA).

It belongs to the sodium:solute symporter (SSF) (TC 2.A.21) family. In terms of tissue distribution, expressed in small intestine. Expressed in kidney.

It localises to the cell membrane. It carries out the reaction D-glucose(out) + 2 Na(+)(out) = D-glucose(in) + 2 Na(+)(in). Its activity is regulated as follows. Inhibited by phlorizin. Low-affinity sodium/D-glucose symporter. Generates D-glucose-induced depolarization in a pH-independent manner. In Mus musculus (Mouse), this protein is Solute carrier family 5 member 4B.